The primary structure comprises 373 residues: ORC1-type DNA replication protein 2 (373 aa).

ATP is bound by residues 63–67 (TGKTS), Y205, and R217.

It belongs to the CDC6/cdc18 family.

Involved in regulation of DNA replication. In Methanosarcina mazei (strain ATCC BAA-159 / DSM 3647 / Goe1 / Go1 / JCM 11833 / OCM 88) (Methanosarcina frisia), this protein is ORC1-type DNA replication protein 2 (cdc6-2).